Reading from the N-terminus, the 204-residue chain is N-(5'-phosphoribosyl)anthranilate isomerase (204 aa).

The protein belongs to the TrpF family.

The catalysed reaction is N-(5-phospho-beta-D-ribosyl)anthranilate = 1-(2-carboxyphenylamino)-1-deoxy-D-ribulose 5-phosphate. It participates in amino-acid biosynthesis; L-tryptophan biosynthesis; L-tryptophan from chorismate: step 3/5. This Bacillus mycoides (strain KBAB4) (Bacillus weihenstephanensis) protein is N-(5'-phosphoribosyl)anthranilate isomerase.